Here is a 199-residue protein sequence, read N- to C-terminus: Thymidylate kinase (199 aa).

Residue Gly7–Ser14 coordinates ATP.

It belongs to the thymidylate kinase family.

It carries out the reaction dTMP + ATP = dTDP + ADP. Phosphorylation of dTMP to form dTDP in both de novo and salvage pathways of dTTP synthesis. In Neorickettsia sennetsu (strain ATCC VR-367 / Miyayama) (Ehrlichia sennetsu), this protein is Thymidylate kinase.